The sequence spans 214 residues: tRNA (guanine-N(7)-)-methyltransferase (214 aa).

The S-adenosyl-L-methionine site is built by E44, E69, D96, and D118. D118 is an active-site residue. Residues K122, D154, and 191-194 (TEYE) each bind substrate.

It belongs to the class I-like SAM-binding methyltransferase superfamily. TrmB family.

It carries out the reaction guanosine(46) in tRNA + S-adenosyl-L-methionine = N(7)-methylguanosine(46) in tRNA + S-adenosyl-L-homocysteine. The protein operates within tRNA modification; N(7)-methylguanine-tRNA biosynthesis. Its function is as follows. Catalyzes the formation of N(7)-methylguanine at position 46 (m7G46) in tRNA. The polypeptide is tRNA (guanine-N(7)-)-methyltransferase (Listeria innocua serovar 6a (strain ATCC BAA-680 / CLIP 11262)).